The sequence spans 415 residues: Dynein assembly factor with WD repeat domains 1 (415 aa).

WD repeat units follow at residues 90–129, 132–174, 175–214, 217–256, 259–298, 301–340, 343–384, and 386–415; these read AHIL…ELNT, GHRN…HTFR, GHTA…EVYT, GHSA…KVNI, GHCA…CVAT, GHDD…CIAK, GHEG…QVLE, and HTDE…RIWR.

This sequence belongs to the WD repeat WDR69 family. As to quaternary structure, interacts with IFT46.

It is found in the cytoplasm. The protein resides in the cytoskeleton. It localises to the flagellum basal body. The protein localises to the flagellum axoneme. Functionally, required for axonemal dynein assembly and ciliary motility in ciliated organs, including Kupffer's vesicle, during embryogenesis. Facilitates the onset of robust cilia motility during development. The polypeptide is Dynein assembly factor with WD repeat domains 1 (Homo sapiens (Human)).